A 119-amino-acid polypeptide reads, in one-letter code: Large ribosomal subunit protein uL24 (119 aa).

It belongs to the universal ribosomal protein uL24 family. In terms of assembly, part of the 50S ribosomal subunit.

In terms of biological role, one of two assembly initiator proteins, it binds directly to the 5'-end of the 23S rRNA, where it nucleates assembly of the 50S subunit. Functionally, located at the polypeptide exit tunnel on the outside of the subunit. The sequence is that of Large ribosomal subunit protein uL24 from Saccharolobus solfataricus (strain ATCC 35092 / DSM 1617 / JCM 11322 / P2) (Sulfolobus solfataricus).